A 287-amino-acid chain; its full sequence is Cyclopropane mycolic acid synthase MmaA2 (287 aa).

S-adenosyl-L-methionine-binding positions include 33 to 34, 72 to 74, 94 to 99, 123 to 124, and I136; these read YS, GCG, TLSKNQ, and WE. C269 is an active-site residue.

It belongs to the CFA/CMAS family.

It catalyses the reaction a 1-acyl-2-(9Z)-enoyl-sn-glycero-3-phospholipid + S-adenosyl-L-methionine = a 1-acyl-2-(9-cyclopronane)-acyl-sn-glycero-3-phospholipid + S-adenosyl-L-homocysteine + H(+). The protein operates within lipid metabolism; mycolic acid biosynthesis. In terms of biological role, catalyzes the conversion of a double bond to a cis cyclopropane ring at the distal position of an alpha mycolic acid via the transfer of a methylene group from S-adenosyl-L-methionine. MmaA2 also catalyzes the biosynthesis of the cis-cyclopropanated methoxymycolates. Cyclopropanated mycolic acids are key factors participating in cell envelope permeability, host immunomodulation and persistence. The polypeptide is Cyclopropane mycolic acid synthase MmaA2 (cmaC) (Mycobacterium bovis (strain ATCC BAA-935 / AF2122/97)).